The chain runs to 107 residues: UPF0145 protein YbjQ (107 aa).

The protein belongs to the UPF0145 family.

The polypeptide is UPF0145 protein YbjQ (Salmonella dublin (strain CT_02021853)).